A 219-amino-acid chain; its full sequence is 7-cyano-7-deazaguanine synthase (219 aa).

An ATP-binding site is contributed by 11–21 (FSGGQDSTTCL). Residues cysteine 188, cysteine 196, cysteine 199, and cysteine 202 each coordinate Zn(2+).

Belongs to the QueC family. Requires Zn(2+) as cofactor.

The catalysed reaction is 7-carboxy-7-deazaguanine + NH4(+) + ATP = 7-cyano-7-deazaguanine + ADP + phosphate + H2O + H(+). Its pathway is purine metabolism; 7-cyano-7-deazaguanine biosynthesis. Its function is as follows. Catalyzes the ATP-dependent conversion of 7-carboxy-7-deazaguanine (CDG) to 7-cyano-7-deazaguanine (preQ(0)). The chain is 7-cyano-7-deazaguanine synthase from Glaesserella parasuis serovar 5 (strain SH0165) (Haemophilus parasuis).